Reading from the N-terminus, the 128-residue chain is Large ribosomal subunit protein bL12c (128 aa).

The segment at 103 to 128 (QEGLGKDAAEDAKKQIEDAGGKVSLT) is disordered. Residues 106 to 122 (LGKDAAEDAKKQIEDAG) show a composition bias toward basic and acidic residues.

This sequence belongs to the bacterial ribosomal protein bL12 family. As to quaternary structure, homodimer. Part of the ribosomal stalk of the 50S ribosomal subunit. Forms a multimeric L10(L12)X complex, where L10 forms an elongated spine to which 2 to 4 L12 dimers bind in a sequential fashion. Binds GTP-bound translation factors.

It localises to the plastid. It is found in the chloroplast. In terms of biological role, forms part of the ribosomal stalk which helps the ribosome interact with GTP-bound translation factors. Is thus essential for accurate translation. This is Large ribosomal subunit protein bL12c from Thalassiosira pseudonana (Marine diatom).